Reading from the N-terminus, the 785-residue chain is Adhesion G-protein coupled receptor G7 (785 aa).

A signal peptide spans 1 to 26 (MRSCRSCNVRVLVAIVCGLLTGIVLG). The Extracellular segment spans residues 27–435 (LGIWRMVIRI…KYPKSLDILS (409 aa)). Asparagine 82, asparagine 122, asparagine 133, asparagine 152, asparagine 159, asparagine 178, asparagine 195, asparagine 239, asparagine 289, asparagine 348, asparagine 400, and asparagine 408 each carry an N-linked (GlcNAc...) asparagine glycan. The GAIN-B domain maps to 271-425 (FSVQKGSSNS…AVLMSFKKDY (155 aa)). 2 disulfide bridges follow: cysteine 380/cysteine 407 and cysteine 395/cysteine 409. Residues 380–425 (CVYWNFLINDWDTQGCQKTGNTTEFLRCNCSHTTNFAVLMSFKKDY) form a GPS region. The helical transmembrane segment at 436–456 (NIGCALSIAGLALTILFQILT) threads the bilayer. At 457 to 465 (RKIRKTSVT) the chain is on the cytoplasmic side. Residues 466-486 (WVLVSLCSSMLIFNLLFVFGI) form a helical membrane-spanning segment. The Extracellular portion of the chain corresponds to 487–523 (ENSNKNLKTSDSDINVKPENNKIPESDTIETPNPSCT). The helical transmembrane segment at 524 to 544 (AIAALLHYFLLVTFTWNGLSA) threads the bilayer. Residues 545-561 (TQLYFLLIRTMKPLPRH) lie on the Cytoplasmic side of the membrane. A helical transmembrane segment spans residues 562 to 582 (FIIFISLVGWGVPAIIVGVTI). Residues 583-623 (GSIYALSGNKRYWELDYRQEEICWLAVPKDNDYARSPLLWS) are Extracellular-facing. Residues 624-644 (FIIPVTIILITNITIFVIITV) form a helical membrane-spanning segment. Residues 645–668 (KVLWKNNQNLTSTKKVSSLKKVFS) lie on the Cytoplasmic side of the membrane. Residues 669-689 (TLSIAVVFGVTWILAYAMLIS) form a helical membrane-spanning segment. The Extracellular portion of the chain corresponds to 690–694 (NDDIR). Residues 695-715 (IVFSYIFCLFNTTQGLQIFIL) traverse the membrane as a helical segment. The Cytoplasmic portion of the chain corresponds to 716–785 (YTVRTKVFQS…SGMTEETSLS (70 aa)).

It belongs to the G-protein coupled receptor 2 family. Adhesion G-protein coupled receptor (ADGR) subfamily. As to expression, selectively expressed in the intestinal tissues.

It localises to the membrane. Functionally, orphan receptor. The sequence is that of Adhesion G-protein coupled receptor G7 (Adgrg7) from Mus musculus (Mouse).